An 84-amino-acid chain; its full sequence is Neurotoxin BmK-M11 (84 aa).

A signal peptide spans methionine 1–serine 19. Residues arginine 21–histidine 83 form the LCN-type CS-alpha/beta domain. Cystine bridges form between cysteine 31-cysteine 82, cysteine 35-cysteine 55, cysteine 41-cysteine 65, and cysteine 45-cysteine 67. Position 84 (arginine 84) is a propeptide, removed by a carboxypeptidase.

This sequence belongs to the long (4 C-C) scorpion toxin superfamily. Sodium channel inhibitor family. Alpha subfamily. Expressed by the venom gland.

Its subcellular location is the secreted. Its function is as follows. Alpha toxins bind voltage-independently at site-3 of sodium channels (Nav) and inhibit the inactivation of the activated channels, thereby blocking neuronal transmission. This recombinant toxin selectively inhibits the fast inactivation of mNav1.4/SCN4A (EC(50)=82.3 nM) (tested in HEK293 cells). The sequence is that of Neurotoxin BmK-M11 from Olivierus martensii (Manchurian scorpion).